An 80-amino-acid polypeptide reads, in one-letter code: Acyl carrier protein (80 aa).

The region spanning 4–79 (EEILQKVCSI…DAVKFIEEKK (76 aa)) is the Carrier domain. Position 39 is an O-(pantetheine 4'-phosphoryl)serine (serine 39).

It belongs to the acyl carrier protein (ACP) family. In terms of processing, 4'-phosphopantetheine is transferred from CoA to a specific serine of apo-ACP by AcpS. This modification is essential for activity because fatty acids are bound in thioester linkage to the sulfhydryl of the prosthetic group.

The protein localises to the cytoplasm. Its pathway is lipid metabolism; fatty acid biosynthesis. In terms of biological role, carrier of the growing fatty acid chain in fatty acid biosynthesis. This chain is Acyl carrier protein, found in Prochlorococcus marinus subsp. pastoris (strain CCMP1986 / NIES-2087 / MED4).